Reading from the N-terminus, the 241-residue chain is Tumor necrosis factor ligand superfamily member 13 (241 aa).

Positions Met1–Arg95 are excised as a propeptide. In terms of domain architecture, THD spans Ser107–Leu241. N-linked (GlcNAc...) asparagine glycosylation is present at Asn115. Residues Cys187 and Cys202 are joined by a disulfide bond.

This sequence belongs to the tumor necrosis factor family. In terms of assembly, homotrimer. The soluble form derives from the membrane form by proteolytic processing.

Its subcellular location is the secreted. Functionally, cytokine that binds to TNFRSF13B/TACI and to TNFRSF17/BCMA. Plays a role in the regulation of tumor cell growth. May be involved in monocyte/macrophage-mediated immunological processes. This chain is Tumor necrosis factor ligand superfamily member 13 (Tnfsf13), found in Mus musculus (Mouse).